The primary structure comprises 399 residues: Tryptophan synthase beta chain (399 aa).

An N6-(pyridoxal phosphate)lysine modification is found at Lys-90.

This sequence belongs to the TrpB family. Tetramer of two alpha and two beta chains. It depends on pyridoxal 5'-phosphate as a cofactor.

The enzyme catalyses (1S,2R)-1-C-(indol-3-yl)glycerol 3-phosphate + L-serine = D-glyceraldehyde 3-phosphate + L-tryptophan + H2O. It participates in amino-acid biosynthesis; L-tryptophan biosynthesis; L-tryptophan from chorismate: step 5/5. In terms of biological role, the beta subunit is responsible for the synthesis of L-tryptophan from indole and L-serine. The sequence is that of Tryptophan synthase beta chain from Bacillus pumilus (strain SAFR-032).